The chain runs to 111 residues: U-scoloptoxin(16)-Sm2a (111 aa).

A signal peptide spans 1 to 28; the sequence is MCAKPNHLFVTVTFIFGFAVCIVQISAW.

Belongs to the scoloptoxin-16 family. Contains 4 disulfide bonds. Expressed by the venom gland.

It localises to the secreted. This Scolopendra morsitans (Tanzanian blue ringleg centipede) protein is U-scoloptoxin(16)-Sm2a.